The sequence spans 382 residues: Probable trehalose-phosphate phosphatase 2 (382 aa).

This sequence belongs to the trehalose phosphatase family. Requires a divalent metal cation as cofactor. Expressed in roots and shoots.

The catalysed reaction is alpha,alpha-trehalose 6-phosphate + H2O = alpha,alpha-trehalose + phosphate. The protein operates within glycan biosynthesis; trehalose biosynthesis. Removes the phosphate from trehalose 6-phosphate to produce free trehalose. Trehalose accumulation in plant may improve abiotic stress tolerance. The chain is Probable trehalose-phosphate phosphatase 2 (TPP2) from Oryza sativa subsp. japonica (Rice).